A 369-amino-acid chain; its full sequence is p21-activated protein kinase-interacting protein 1-like (369 aa).

5 WD repeats span residues 33–70, 73–111, 114–153, 195–233, and 236–278; these read AHTASLSAVAVNSKYVVTGSRDESIQIYDMRKKVEHGA, QHNGTITCLEFYGTAHLLSGAEDGLICIWNTKRWECLKS, AHKGHVTSLSIHPSGKLALSVGTDKTLRTWNLVEGRSAFI, TIEKRISSIRFITDSVLAIAGDDEIIRFYSCDSQKCLCE, and AREN…NNVP. Residues 311–369 form a disordered region; the sequence is ATSTEANESEKPSAVKKKKVCGMNKSGKLTKQRRRIVPAKRKLEAPLQKKKKKKQNSSE. 2 stretches are compositionally biased toward basic residues: residues 338–350 and 358–369; these read KLTKQRRRIVPAK and QKKKKKKQNSSE.

It localises to the nucleus. It is found in the nucleolus. Functionally, negatively regulates the PAK1 kinase. PAK1 is a member of the PAK kinase family, which has been shown to play a positive role in the regulation of signaling pathways involving MAPK8 and RELA. PAK1 exists as an inactive homodimer, which is activated by binding of small GTPases such as CDC42 to an N-terminal regulatory domain. PAK1IP1 also binds to the N-terminus of PAK1, and inhibits the specific activation of PAK1 by CDC42. May be involved in ribosomal large subunit assembly. The chain is p21-activated protein kinase-interacting protein 1-like (PAK1IP1) from Gallus gallus (Chicken).